We begin with the raw amino-acid sequence, 148 residues long: MASKRILKELKDLQKDPPTSCSAGPVAEDMFHWQATLMGPSDSPYAGGVFLVTIHFPPDYPFKPPKVALKTKVFHPNINSNGSICLDILKEQWSPALTISKVLLSICSLLTDPNPDDPLVPEIAHMYKTDRAKYESTARSWTQKYAMG.

The 147-residue stretch at 1–147 (MASKRILKEL…ARSWTQKYAM (147 aa)) folds into the UBC core domain. The Glycyl thioester intermediate role is filled by Cys85.

It belongs to the ubiquitin-conjugating enzyme family.

The catalysed reaction is S-ubiquitinyl-[E1 ubiquitin-activating enzyme]-L-cysteine + [E2 ubiquitin-conjugating enzyme]-L-cysteine = [E1 ubiquitin-activating enzyme]-L-cysteine + S-ubiquitinyl-[E2 ubiquitin-conjugating enzyme]-L-cysteine.. It participates in protein modification; protein ubiquitination. E2 conjugating enzyme that associates with the E3 ubiquitin-protein ligase EL5 to mediate ubiquitination of target proteins. The protein is Ubiquitin-conjugating enzyme E2 5B (UBC5B) of Oryza sativa subsp. japonica (Rice).